The following is a 201-amino-acid chain: Large ribosomal subunit protein uL4 (201 aa).

Residues 45-75 are disordered; the sequence is AQKSRSEVSGSGKKPWRQKGTGRARSGSLRS.

Belongs to the universal ribosomal protein uL4 family. In terms of assembly, part of the 50S ribosomal subunit.

One of the primary rRNA binding proteins, this protein initially binds near the 5'-end of the 23S rRNA. It is important during the early stages of 50S assembly. It makes multiple contacts with different domains of the 23S rRNA in the assembled 50S subunit and ribosome. In terms of biological role, forms part of the polypeptide exit tunnel. The polypeptide is Large ribosomal subunit protein uL4 (Buchnera aphidicola subsp. Cinara cedri (strain Cc)).